Consider the following 129-residue polypeptide: Small ribosomal subunit protein uS11 (129 aa).

This sequence belongs to the universal ribosomal protein uS11 family. In terms of assembly, part of the 30S ribosomal subunit. Interacts with proteins S7 and S18. Binds to IF-3.

In terms of biological role, located on the platform of the 30S subunit, it bridges several disparate RNA helices of the 16S rRNA. Forms part of the Shine-Dalgarno cleft in the 70S ribosome. The protein is Small ribosomal subunit protein uS11 of Rhizorhabdus wittichii (strain DSM 6014 / CCUG 31198 / JCM 15750 / NBRC 105917 / EY 4224 / RW1) (Sphingomonas wittichii).